Consider the following 791-residue polypeptide: Centrosomal protein of 89 kDa (791 aa).

The interval 27 to 203 (APKPAVPRTP…HTQQKDVKHS (177 aa)) is disordered. Positions 30-45 (PAVPRTPPPRSPNPSP) are enriched in pro residues. Serine 50 bears the Phosphoserine mark. Residues 50-62 (SALAAAILATTLT) show a composition bias toward low complexity. Residues 75-89 (SRSESDASDIEKDSF) are compositionally biased toward basic and acidic residues. The span at 94–107 (ATTSELRLRQSWQN) shows a compositional bias: polar residues. Basic and acidic residues predominate over residues 137–161 (RESESTWKDVGDGRDATYTVPHRDQ). Positions 181–190 (SDSSSSSSSS) are enriched in low complexity. Coiled coils occupy residues 252 to 291 (SANQALSCELSALRQAMKDLQLKLKLVEKDNRKLKETEKA), 370 to 598 (LLAY…MGKE), and 670 to 737 (HRLK…SLLQ).

The protein localises to the cytoplasm. The protein resides in the cytosol. Its subcellular location is the cytoskeleton. It is found in the microtubule organizing center. It localises to the centrosome. The protein localises to the spindle pole. The protein resides in the centriole. Its subcellular location is the mitochondrion intermembrane space. Functionally, required for ciliogenesis. Also plays a role in mitochondrial metabolism where it may modulate complex IV activity. This chain is Centrosomal protein of 89 kDa (Cep89), found in Mus musculus (Mouse).